The primary structure comprises 192 residues: MARLIDQFERLPGIGPRTAQRLALHLLNQPEEQIRQFADALLAARTQVGQCQTCFHLSADPECEICRNPERRNGLICVVADSRDLLALERTREFQGRYHVLGGLISPMDGIGPELLHVTPLVARINQEDITEVILALTPSVEGDTTSLYLARLLKPFCPVSRIAYGLPMGSELEYADEVTLSRALEGRRPLD.

Residues 51–66 (CQTCFHLSADPECEIC) form a C4-type zinc finger. The region spanning 74-168 (GLICVVADSR…PVSRIAYGLP (95 aa)) is the Toprim domain.

Belongs to the RecR family.

Functionally, may play a role in DNA repair. It seems to be involved in an RecBC-independent recombinational process of DNA repair. It may act with RecF and RecO. The sequence is that of Recombination protein RecR from Parasynechococcus marenigrum (strain WH8102).